We begin with the raw amino-acid sequence, 1837 residues long: Zinc finger SWIM domain-containing protein 8 (1837 aa).

3 positions are modified to phosphoserine: serine 36, serine 48, and serine 53. Residues 45–65 (RKQSAGPNSPTGGGGGGGSGG) are disordered. A compositionally biased stretch (gly residues) spans 55 to 65 (TGGGGGGGSGG). Residues 172–208 (YNVAVMFDRCRVTSCSCTCGAGAKWCTHVVALCLFRI) form an SWIM-type zinc finger. A Phosphoserine modification is found at serine 437. 3 disordered regions span residues 514–727 (SRPG…EEDD), 803–823 (NPPDLKVEPPPAKGKKNKVST), and 1016–1232 (SQTH…VPNQ). 2 stretches are compositionally biased toward basic and acidic residues: residues 523-532 (GLEESRDRPR) and 566-575 (LSAEGGDKAL). Serine 567 is subject to Phosphoserine. Residues 579–602 (GPGGGKAKALGGAGSGSKGSAGGG) show a composition bias toward gly residues. Polar residues predominate over residues 1019 to 1040 (HKPQTLSSFYSSSRPTTASQRS). The segment covering 1119-1130 (SRGGYNGRGWGS) has biased composition (gly residues). The residue at position 1139 (threonine 1139) is a Phosphothreonine. Positions 1144–1159 (IDSSAPETTSDSSPTL) are enriched in polar residues. Residues serine 1153, serine 1156, and serine 1160 each carry the phosphoserine modification. Residues 1174–1209 (GRGQDSDSISSSSSDSLGSSSSSGSRRASASGGARA) are compositionally biased toward low complexity. Residues 1210-1226 (KTVEVGRYKGRRPESHA) are compositionally biased toward basic and acidic residues. Serine 1267 carries the post-translational modification Phosphoserine. Disordered regions lie at residues 1442–1464 (SASGIRAGGEAGRGMPEGRGGPG) and 1635–1656 (QPSPLVSGGFPPPEEETHSQPV). The segment covering 1447–1464 (RAGGEAGRGMPEGRGGPG) has biased composition (gly residues). The residue at position 1836 (serine 1836) is a Phosphoserine.

It belongs to the ZSWIM8 family. As to quaternary structure, component of the SCF-like E3 ubiquitin-protein ligase complex which contains CUL3, RBX1, ELOB, ELOC and ZSWIM8. (Microbial infection) Interacts with Zika virus protein NS5; this interaction allows STAT2 binding and subsequent proteasomal degradation.

Its subcellular location is the cytoplasm. It is found in the cytosol. Its pathway is protein modification; protein ubiquitination. Substrate recognition component of a SCF-like E3 ubiquitin-protein ligase complex that promotes target-directed microRNA degradation (TDMD), a process that mediates degradation of microRNAs (miRNAs). The SCF-like E3 ubiquitin-protein ligase complex acts by catalyzing ubiquitination and subsequent degradation of AGO proteins (AGO1, AGO2, AGO3 and/or AGO4), thereby exposing miRNAs for degradation. Specifically recognizes and binds AGO proteins when they are engaged with a TDMD target. May also act as a regulator of axon guidance: specifically recognizes misfolded ROBO3 and promotes its ubiquitination and subsequent degradation. Plays an essential role for proper embryonic development of heart and lung. Controls protein quality of DAB1, a key signal molecule for brain development, thus protecting its signaling strength. Mechanistically, recognizes intrinsically disordered regions of DAB1 and eliminates misfolded DAB1 that cannot be properly phosphorylated. Its function is as follows. (Microbial infection) Participates in Zika virus inhibition of IFN signaling by acting as a scaffold protein to connect ZSWIM8/CUL3 ligase complex and STAT2, leading to STAT2 degradation. The protein is Zinc finger SWIM domain-containing protein 8 of Homo sapiens (Human).